The chain runs to 640 residues: PTS system mannitol-specific EIICBA component (640 aa).

The PTS EIIC type-2 domain occupies 12 to 343 (LGRFLSAMIM…LKISNRNHYV (332 aa)). The next 6 helical transmembrane spans lie at 24–45 (ISVFIAWGIISGLFIKSGWCPN), 50–70 (KVLSPISVYLFPILIANTGGY), 134–155 (SVGILGVLLLFISFLCIGPMIE), 165–185 (VNLMINNHLLPFIAILIEPAK), 273–292 (LILGSITGIFILIVLRGGLI), and 313–334 (VINLLAIIISFLVSFLVSCMLL). One can recognise a PTS EIIB type-2 domain in the interval 379-475 (RNIIFACDAG…YLVENNLDNN (97 aa)). Residue cysteine 385 is the Phosphocysteine intermediate; for EIIB activity of the active site. Cysteine 385 carries the post-translational modification Phosphocysteine; by EIIA. The region spanning 496–638 (FSLTKENIFL…DDVLYLFSRK (143 aa)) is the PTS EIIA type-2 domain. Histidine 556 (tele-phosphohistidine intermediate; for EIIA activity) is an active-site residue. Residue histidine 556 is modified to Phosphohistidine; by HPr.

Homodimer. An intramolecular phosphotransfer takes places between His-556 and Cys-385.

It localises to the cell inner membrane. It carries out the reaction D-mannitol(out) + N(pros)-phospho-L-histidyl-[protein] = D-mannitol 1-phosphate(in) + L-histidyl-[protein]. Its function is as follows. The phosphoenolpyruvate-dependent sugar phosphotransferase system (sugar PTS), a major carbohydrate active transport system, catalyzes the phosphorylation of incoming sugar substrates concomitantly with their translocation across the cell membrane. This system is involved in D-mannitol transport. The sequence is that of PTS system mannitol-specific EIICBA component (mtlA) from Buchnera aphidicola subsp. Baizongia pistaciae (strain Bp).